The following is a 377-amino-acid chain: MGAAVTLNRIKIETGIADIRDKYMVLDFNYPEYNRAVRFAEESYMYYYETSPGEIKPKFCLIDGMSIDHCSSFIVPEFAKQYVLIHGEPCSSFKFRPGSLIYYQNEVTPEYIKDLKYATDYIASGQRCHFIKKDYLLGDSDSVAKCCSKTNTKHCPKIFNNNYKTEHCDDFMTGFCRNDPGNPNCLEWLRVKRKPAMSTYSDICSKHMDARYCSEFIRIIRPDYFTFGDTALYVFCNDHKGNRNCWCANYPKSNSGDKYLGPRVCWLHECTDESRDRKWLYYNQDVQRTRCKYVGCTINVNSLALKNSQAELTSNCTRTTSAVGDVHPGEPVVNDKIKLPTWLGASITLVVISVIFYFISIYSRPKIKTNDINVRRR.

Residue G2 is the site of N-myristoyl glycine; by host attachment. Residues 2 to 341 are Virion surface-facing; it reads GAAVTLNRIK…VVNDKIKLPT (340 aa). Residues 342–362 traverse the membrane as a helical segment; it reads WLGASITLVVISVIFYFISIY. At 363 to 377 the chain is on the intravirion side; it reads SRPKIKTNDINVRRR.

This sequence belongs to the orthopoxvirus OPG143 family. Part of a stable entry-fusion complex (EFC) which is at least composed of proteins OPG143, OPG147, OPG155, OPG086, OPG094, OPG107, OPG104, and OPG099. Formation of the viral membrane is necessary for the assembly of the complex. Interacts with OPG094. Interacts with OPG153. Most cysteines are linked by disulfide bonds. They are created by the viral disulfide bond formation pathway, a poxvirus-specific redox pathway that operates on the cytoplasmic side of the MV membranes.

It localises to the virion membrane. Its function is as follows. Envelope protein part of the entry-fusion complex responsible for the virus membrane fusion with host cell membrane during virus entry. Also plays a role in cell-cell fusion (syncytium formation). The polypeptide is Virion membrane protein OPG143 (OPG143) (Monkeypox virus).